Consider the following 1314-residue polypeptide: Phosphoribosylformylglycinamidine synthase (1314 aa).

Residues 307-318 (GAATGAGGEIRD) and alanine 674 each bind ATP. Aspartate 675, glutamate 714, asparagine 718, and aspartate 880 together coordinate Mg(2+). Serine 882 is an ATP binding site. Residues 1063-1314 (IAILREQGVN…LFAGARKALG (252 aa)) enclose the Glutamine amidotransferase type-1 domain. Cysteine 1156 serves as the catalytic Nucleophile. Residues histidine 1279 and glutamate 1281 contribute to the active site.

The protein in the N-terminal section; belongs to the FGAMS family. In terms of assembly, monomer.

The protein localises to the cytoplasm. It carries out the reaction N(2)-formyl-N(1)-(5-phospho-beta-D-ribosyl)glycinamide + L-glutamine + ATP + H2O = 2-formamido-N(1)-(5-O-phospho-beta-D-ribosyl)acetamidine + L-glutamate + ADP + phosphate + H(+). It participates in purine metabolism; IMP biosynthesis via de novo pathway; 5-amino-1-(5-phospho-D-ribosyl)imidazole from N(2)-formyl-N(1)-(5-phospho-D-ribosyl)glycinamide: step 1/2. Its function is as follows. Phosphoribosylformylglycinamidine synthase involved in the purines biosynthetic pathway. Catalyzes the ATP-dependent conversion of formylglycinamide ribonucleotide (FGAR) and glutamine to yield formylglycinamidine ribonucleotide (FGAM) and glutamate. This chain is Phosphoribosylformylglycinamidine synthase, found in Neisseria gonorrhoeae (strain ATCC 700825 / FA 1090).